The sequence spans 400 residues: Spermatogenic leucine zipper protein 1 (400 aa).

The segment at 1 to 27 (MADSDSSSEMPAHSPSPSPIPCAKQKP) is disordered. Residue S106 is modified to Phosphoserine. Residues 116 to 127 (RNKLRFKDDLFI) are helix-loop-helix motif. The segment at 128–193 (HFDPERENTM…HIRGEYRKLR (66 aa)) is basic motif. 2 coiled-coil regions span residues 182–231 (SVHI…KDIV) and 268–293 (LIAA…LHLH). Position 207 is a phosphoserine (S207). The interval 252 to 273 (LEEQVKKLSQDTHSLHLIAALL) is leucine-zipper. Residues 295 to 332 (AGPGHEKPLQTSGEQDKKCGEQDKKCGEQDKKCGEQDK) are disordered.

As to quaternary structure, interacts with PPP1CC isoform gamma-2. In terms of processing, phosphorylated by MAPK1/ERK2 and MAPK3/ERK1.

It localises to the cytoplasm. It is found in the nucleus. Transcription factor that binds to the DNA sequence 5'-CANNTG-3'(E box) and the G-box motif. May play an important role in the regulation of cell proliferation and differentiation during spermatogenesis. This Rattus norvegicus (Rat) protein is Spermatogenic leucine zipper protein 1 (Spz1).